The sequence spans 654 residues: Tetratricopeptide repeat protein 30 homolog (654 aa).

TPR repeat units lie at residues 10 to 43 (EGHVTRTIYNLIKDKRYEDVIECITNIGEAANTR), 44 to 76 (AGLSTLGHCYYHAQKYEEAATCYEQLCQLAPKE), 143 to 176 (ADTLNDEGCLLYQADQHESAVQRFQAALQVGGFN), 178 to 210 (LVAYNVALAHFQRKQRAQALDYTSEIVERGVRN), 384 to 417 (LAAKVQEVRATNEQHALRDALKDYEQALELYLPV), 449 to 483 (AVWRLNAGHVLFMQGDKYNEAAAFYEPIVRQHSDD), and 533 to 566 (CIVNLVVGTLYCAKSNYEFGLTRIAHALEGGAGG).

It belongs to the TTC30/dfy-1/fleer family.

The protein localises to the cell projection. The protein resides in the cilium. Functionally, required for polyglutamylation of axonemal tubulin in sensory cilia. Plays a role in anterograde intraflagellar transport (IFT), the process by which cilia precursors are transported from the base of the cilium to the site of their incorporation at the tip. The chain is Tetratricopeptide repeat protein 30 homolog from Drosophila pseudoobscura pseudoobscura (Fruit fly).